Consider the following 308-residue polypeptide: MSYNHKNVLDTEQFSKSDLDFLIKKIKDMEHLVERHKAFGILTGKLLASLFFEASTRTRLSFEAAMERLGGRVISTVGFQFSSISKGETLYDTMKMVEAYADIAVIRHPVEGSSRIAAGAVKIPVVNAGDGAGQHPTQAILDLYTIISEKGTLDGLSVAFIGDLKYGRTIHSLINLLRHYKVRLYLISPIELALPDSYKKGLEGYPLTLEETTDIKAVWECDVAYVTRIQEERFPDHKEYERLKDLFKINKELILASKKETTILHPLPRVNELSTDVDDLPNAAYFRQARYGVVSRMTLLCLCLGQDF.

Positions 57 and 58 each coordinate carbamoyl phosphate. Position 86 (Lys86) interacts with L-aspartate. Residues Arg107, His135, and Gln138 each coordinate carbamoyl phosphate. Residues Arg168 and Arg228 each coordinate L-aspartate. Positions 267 and 268 each coordinate carbamoyl phosphate.

This sequence belongs to the aspartate/ornithine carbamoyltransferase superfamily. ATCase family. In terms of assembly, heterododecamer (2C3:3R2) of six catalytic PyrB chains organized as two trimers (C3), and six regulatory PyrI chains organized as three dimers (R2).

The enzyme catalyses carbamoyl phosphate + L-aspartate = N-carbamoyl-L-aspartate + phosphate + H(+). The protein operates within pyrimidine metabolism; UMP biosynthesis via de novo pathway; (S)-dihydroorotate from bicarbonate: step 2/3. In terms of biological role, catalyzes the condensation of carbamoyl phosphate and aspartate to form carbamoyl aspartate and inorganic phosphate, the committed step in the de novo pyrimidine nucleotide biosynthesis pathway. The sequence is that of Aspartate carbamoyltransferase catalytic subunit from Leptospira borgpetersenii serovar Hardjo-bovis (strain JB197).